The chain runs to 411 residues: Tyrosine--tRNA ligase (411 aa).

Positions 48 to 57 (PTAPDIHLGH) match the 'HIGH' region motif. Positions 232–236 (KMSKS) match the 'KMSKS' region motif. K235 contributes to the ATP binding site. The region spanning 347 to 409 (VLLPKVLFSA…GKRRFLKIIF (63 aa)) is the S4 RNA-binding domain.

It belongs to the class-I aminoacyl-tRNA synthetase family. TyrS type 2 subfamily. Homodimer.

It is found in the cytoplasm. It carries out the reaction tRNA(Tyr) + L-tyrosine + ATP = L-tyrosyl-tRNA(Tyr) + AMP + diphosphate + H(+). Its function is as follows. Catalyzes the attachment of tyrosine to tRNA(Tyr) in a two-step reaction: tyrosine is first activated by ATP to form Tyr-AMP and then transferred to the acceptor end of tRNA(Tyr). This Carboxydothermus hydrogenoformans (strain ATCC BAA-161 / DSM 6008 / Z-2901) protein is Tyrosine--tRNA ligase.